The following is a 392-amino-acid chain: Phosphoglycerate kinase (392 aa).

Residues 21 to 23, arginine 36, 59 to 62, arginine 117, and arginine 150 contribute to the substrate site; these read DFN and HLGR. ATP contacts are provided by residues lysine 200, glycine 288, glutamate 319, and 345–348; that span reads GGDS.

This sequence belongs to the phosphoglycerate kinase family. As to quaternary structure, monomer.

It localises to the cytoplasm. The catalysed reaction is (2R)-3-phosphoglycerate + ATP = (2R)-3-phospho-glyceroyl phosphate + ADP. It participates in carbohydrate degradation; glycolysis; pyruvate from D-glyceraldehyde 3-phosphate: step 2/5. This is Phosphoglycerate kinase from Rubrobacter xylanophilus (strain DSM 9941 / JCM 11954 / NBRC 16129 / PRD-1).